The following is a 444-amino-acid chain: Proline--tRNA ligase (444 aa).

Belongs to the class-II aminoacyl-tRNA synthetase family. ProS type 2 subfamily. In terms of assembly, homodimer.

Its subcellular location is the cytoplasm. It catalyses the reaction tRNA(Pro) + L-proline + ATP = L-prolyl-tRNA(Pro) + AMP + diphosphate. Catalyzes the attachment of proline to tRNA(Pro) in a two-step reaction: proline is first activated by ATP to form Pro-AMP and then transferred to the acceptor end of tRNA(Pro). The polypeptide is Proline--tRNA ligase (Methylobacterium sp. (strain 4-46)).